Reading from the N-terminus, the 319-residue chain is Sliding-clamp-loader large subunit (319 aa).

ATP-binding positions include 12 to 15 (EQKY), Ile24, 53 to 58 (GTGKTT), and Arg205.

Belongs to the Tevenvirinae sliding-clamp-loader large subunit family. The sliding-clamp-loader consists of 4 large subunits and 1 small subunit. Interacts with the sliding clamp; this interaction allows the sliding-clamp-loader to open the sliding clamp. Part of the replicase complex that includes the DNA polymerase, the polymerase clamp, the clamp loader complex, the single-stranded DNA binding protein, the primase, the helicase and the helicase assembly factor.

Functionally, forms the sliding-clamp-loader together with the small subunit. Functions as an ATPase enzyme. The clamp loader holds the clamp in an open conformation and places it onto the DNA. 4 ATP molecules must bind to the sliding-clamp-loader before the latter can open the sliding clamp. ATP hydrolysis triggers the detachment of the sliding clamp from the sliding-clamp-loader, freeing the sliding clamp to track along DNA. The protein is Sliding-clamp-loader large subunit (44) of Enterobacteria phage T4 (Bacteriophage T4).